We begin with the raw amino-acid sequence, 310 residues long: Probable deoxyhypusine synthase (310 aa).

Residue K284 is the Nucleophile of the active site.

It belongs to the deoxyhypusine synthase family. It depends on NAD(+) as a cofactor.

The catalysed reaction is [eIF5A protein]-L-lysine + spermidine = [eIF5A protein]-deoxyhypusine + propane-1,3-diamine. It functions in the pathway protein modification; eIF5A hypusination. In terms of biological role, catalyzes the NAD-dependent oxidative cleavage of spermidine and the subsequent transfer of the butylamine moiety of spermidine to the epsilon-amino group of a specific lysine residue of the eIF-5A precursor protein to form the intermediate deoxyhypusine residue. This is Probable deoxyhypusine synthase (dys) from Thermoplasma acidophilum (strain ATCC 25905 / DSM 1728 / JCM 9062 / NBRC 15155 / AMRC-C165).